Reading from the N-terminus, the 185-residue chain is Putative manganese efflux pump MntP (185 aa).

Helical transmembrane passes span 4-24 (LFIG…TDAF), 40-60 (IFHI…AGMA), 64-84 (LLSG…LFIL), 108-128 (LLLF…SLGM), 134-154 (FLAV…GLLA), and 165-185 (YSEA…LLPV).

The protein belongs to the MntP (TC 9.B.29) family.

The protein localises to the cell membrane. Probably functions as a manganese efflux pump. The protein is Putative manganese efflux pump MntP of Bacillus velezensis (strain DSM 23117 / BGSC 10A6 / LMG 26770 / FZB42) (Bacillus amyloliquefaciens subsp. plantarum).